We begin with the raw amino-acid sequence, 307 residues long: 4-diphosphocytidyl-2-C-methyl-D-erythritol kinase (307 aa).

Residue K16 is part of the active site. 101-111 (PVAGGMAGGSA) is an ATP binding site. D143 is a catalytic residue.

It belongs to the GHMP kinase family. IspE subfamily.

The catalysed reaction is 4-CDP-2-C-methyl-D-erythritol + ATP = 4-CDP-2-C-methyl-D-erythritol 2-phosphate + ADP + H(+). It participates in isoprenoid biosynthesis; isopentenyl diphosphate biosynthesis via DXP pathway; isopentenyl diphosphate from 1-deoxy-D-xylulose 5-phosphate: step 3/6. Its function is as follows. Catalyzes the phosphorylation of the position 2 hydroxy group of 4-diphosphocytidyl-2C-methyl-D-erythritol. This Nocardia farcinica (strain IFM 10152) protein is 4-diphosphocytidyl-2-C-methyl-D-erythritol kinase.